The sequence spans 221 residues: Protein-L-isoaspartate O-methyltransferase (221 aa).

S68 is an active-site residue.

The protein belongs to the methyltransferase superfamily. L-isoaspartyl/D-aspartyl protein methyltransferase family.

It localises to the cytoplasm. It catalyses the reaction [protein]-L-isoaspartate + S-adenosyl-L-methionine = [protein]-L-isoaspartate alpha-methyl ester + S-adenosyl-L-homocysteine. In terms of biological role, catalyzes the methyl esterification of L-isoaspartyl residues in peptides and proteins that result from spontaneous decomposition of normal L-aspartyl and L-asparaginyl residues. It plays a role in the repair and/or degradation of damaged proteins. The chain is Protein-L-isoaspartate O-methyltransferase from Desulfosudis oleivorans (strain DSM 6200 / JCM 39069 / Hxd3) (Desulfococcus oleovorans).